A 169-amino-acid polypeptide reads, in one-letter code: N5-carboxyaminoimidazole ribonucleotide mutase (169 aa).

Substrate contacts are provided by S16, D19, and R46.

The protein belongs to the AIR carboxylase family. Class I subfamily.

The enzyme catalyses 5-carboxyamino-1-(5-phospho-D-ribosyl)imidazole + H(+) = 5-amino-1-(5-phospho-D-ribosyl)imidazole-4-carboxylate. Its pathway is purine metabolism; IMP biosynthesis via de novo pathway; 5-amino-1-(5-phospho-D-ribosyl)imidazole-4-carboxylate from 5-amino-1-(5-phospho-D-ribosyl)imidazole (N5-CAIR route): step 2/2. Functionally, catalyzes the conversion of N5-carboxyaminoimidazole ribonucleotide (N5-CAIR) to 4-carboxy-5-aminoimidazole ribonucleotide (CAIR). This chain is N5-carboxyaminoimidazole ribonucleotide mutase, found in Escherichia coli O157:H7.